We begin with the raw amino-acid sequence, 296 residues long: Homoserine kinase (296 aa).

86–96 serves as a coordination point for ATP; that stretch reads KAGSGLGSSAA.

The protein belongs to the GHMP kinase family. Homoserine kinase subfamily.

The protein localises to the cytoplasm. It carries out the reaction L-homoserine + ATP = O-phospho-L-homoserine + ADP + H(+). It functions in the pathway amino-acid biosynthesis; L-threonine biosynthesis; L-threonine from L-aspartate: step 4/5. In terms of biological role, catalyzes the ATP-dependent phosphorylation of L-homoserine to L-homoserine phosphate. This chain is Homoserine kinase (thrB), found in Methanocaldococcus jannaschii (strain ATCC 43067 / DSM 2661 / JAL-1 / JCM 10045 / NBRC 100440) (Methanococcus jannaschii).